The chain runs to 156 residues: MSEQNSTEMAFQIQRIYTKDISFEAPKAPQVFQQEWQPEVKLDLDTASSQLADEVYEVVLRVTVTASLGEETAFLCEVQQAGIFSVAGIDGTQLAHCLGAYCPNILFPYARECITSLVSRGTFPQLNLAPVNFDALFMNYLQQQSEGEGAAPHQDA.

It belongs to the SecB family. As to quaternary structure, homotetramer, a dimer of dimers. One homotetramer interacts with 1 SecA dimer.

It is found in the cytoplasm. Its function is as follows. One of the proteins required for the normal export of preproteins out of the cell cytoplasm. It is a molecular chaperone that binds to a subset of precursor proteins, maintaining them in a translocation-competent state. It also specifically binds to its receptor SecA. The chain is Protein-export protein SecB from Serratia proteamaculans (strain 568).